An 83-amino-acid chain; its full sequence is Short neurotoxin VAN-29 (83 aa).

A signal peptide spans 1 to 21 (MKTLLLTLVVVTIVCLDLGYT). 4 disulfides stabilise this stretch: Cys24–Cys45, Cys38–Cys62, Cys64–Cys75, and Cys76–Cys81.

Belongs to the three-finger toxin family. Short-chain subfamily. Type I alpha-neurotoxin sub-subfamily. Expressed by the venom gland.

Its subcellular location is the secreted. In terms of biological role, binds to muscle nicotinic acetylcholine receptor (nAChR) and inhibit acetylcholine from binding to the receptor, thereby impairing neuromuscular transmission. The chain is Short neurotoxin VAN-29 from Laticauda laticaudata (Blue-ringed sea krait).